The sequence spans 509 residues: Zinc metalloproteinase aureolysin (509 aa).

The signal sequence occupies residues 1-27; it reads MRKFSRYAFTSMATVTLLSSLTPAALA. Residues 28–208 constitute a propeptide that is removed on maturation; that stretch reads SDTNHKPATS…VVEKTNLVKE (181 aa). Asp-348 provides a ligand contact to Ca(2+). His-352 is a Zn(2+) binding site. Glu-353 is a catalytic residue. Zn(2+) contacts are provided by His-356 and Glu-376. Ca(2+)-binding residues include Asp-387, Glu-389, Asp-390, Leu-392, Glu-395, Tyr-398, Thr-399, Lys-402, and Asp-405. Residue His-436 is the Proton donor of the active site.

This sequence belongs to the peptidase M4 family. As to quaternary structure, monomer. Requires Ca(2+) as cofactor. Zn(2+) is required as a cofactor.

It catalyses the reaction Cleavage of insulin B chain with specificity similar to that of thermolysin, preferring hydrophobic P1' residues. Activates the glutamyl endopeptidase (EC 3.4.21.19) of Staphylococcus aureus.. In terms of biological role, plays an essential role in immune evasion by helping bacteria to resist complement-mediated killing by neutrophils. Inhibits the deposition of host C3b on bacterial surfaces and the release of the chemoattractant C5a by cleaving the central complement protein C3. The cleavage site renders the C3b molecule vulnerable to proteolytic degradation by host regulators. Cleaves and inactivates host SERPINA1, which is an endogenous protease inhibitor essential for controlling neutrophil serine protease elastase. Also plays an essential role in the cleavage and subsequent activation of the serine protease SspA (glutamyl endopeptidase) which is involved in colonization and infection of human tissues. The chain is Zinc metalloproteinase aureolysin from Staphylococcus aureus.